The chain runs to 399 residues: MQSLSLGQTSISKGLNYLTIMAPGNLWHMRNNFLFGSRCWMTRFSAENIFKSVSFRLFGVKCHNTDSEPLKNEDLLKNLLTMGVDIDMARKRQPGVFHRMITNEQDLKMFLLSKGASKEVIASIISRYPRAITRTPENLSKRWDLWRKIVTSDLEIVNILERSPESFFRSNNNLNLENNIKFLYSVGLTRKCLCRLLTNAPRTFSNSLDLNKQMVEFLQAAGLSLGHNDPADFVRKIIFKNPFILIQSTKRVKANIEFLRSTFNLNSEELLVLICGPGAEILDLSNDYARRSYANIKEKLFSLGCTEEEVQKFVLSYPDVIFLAEKKFNDKIDCLMEENISISQIIENPRVLDSSISTLKSRIKELVNAGCNLSTLNITLLSWSKKRYEAKLKKLSRFA.

The transit peptide at Met1–Leu57 directs the protein to the mitochondrion. 5 interaction with DNA regions span residues Arg169–Ser170, Gln247–Arg251, Ala324–Lys331, Ser355–Thr358, and Ser384–Lys391.

It belongs to the mTERF family. Monomer. Post-translationally, phosphoprotein with mostly four phosphate groups. While the DNA-binding activity is unaffected by the phosphorylation state, only the phosphorylated form of the protein is active for termination activity. Functioning seems to be regulated by phosphorylation.

Its subcellular location is the mitochondrion. In terms of biological role, transcription termination factor. Binds to a 28 bp region within the tRNA(Leu(uur)) gene at a position immediately adjacent to and downstream of the 16S rRNA gene; this region comprises a tridecamer sequence critical for directing accurate termination. Binds DNA along the major grove and promotes DNA bending and partial unwinding. Promotes base flipping. Transcription termination activity appears to be polarized with highest specificity for transcripts initiated on the light strand. The polypeptide is Transcription termination factor 1, mitochondrial (MTERF1) (Homo sapiens (Human)).